Consider the following 95-residue polypeptide: Small ribosomal subunit protein uS19 (95 aa).

It belongs to the universal ribosomal protein uS19 family.

Its function is as follows. Protein S19 forms a complex with S13 that binds strongly to the 16S ribosomal RNA. The polypeptide is Small ribosomal subunit protein uS19 (Myxococcus xanthus (strain DK1622)).